Here is a 189-residue protein sequence, read N- to C-terminus: UPF0301 protein RMA_0049 (189 aa).

The protein belongs to the UPF0301 (AlgH) family.

The polypeptide is UPF0301 protein RMA_0049 (Rickettsia massiliae (strain Mtu5)).